We begin with the raw amino-acid sequence, 359 residues long: F-box protein At5g49610 (359 aa).

The 50-residue stretch at 3–52 (NQKGALFPDEVILQILARLPVKSLFRFKSVCKSWYRLPSDKYFTSLFNQL) folds into the F-box domain.

In terms of assembly, part of a SCF (SKP1-cullin-F-box) protein ligase complex. Interacts with SKP1A, SKP1B, ASK11, ASK12, ASK13 and ASK14.

It participates in protein modification; protein ubiquitination. The polypeptide is F-box protein At5g49610 (Arabidopsis thaliana (Mouse-ear cress)).